Consider the following 285-residue polypeptide: BAG family molecular chaperone regulator 2 (285 aa).

The Ubiquitin-like domain occupies R37–Q113. The BAG domain occupies A132–K210. At S244 the chain carries Phosphoserine.

In terms of assembly, binds to the ATPase domain of HSP70/HSC70 chaperones.

In terms of biological role, co-chaperone that regulates diverse cellular pathways, such as programmed cell death and stress responses. This chain is BAG family molecular chaperone regulator 2 (BAG2), found in Arabidopsis thaliana (Mouse-ear cress).